The sequence spans 74 residues: Antimicrobial peptide ToAp1 (74 aa).

The signal sequence occupies residues 1-22 (MQMKYLIPIFFLVLIVADHCHA). At K39 the chain carries Lysine amide. Residues 40 to 74 (GRRKRDITAQIEQYRNIQKREAAELEELLANLPVY) constitute a propeptide that is removed on maturation.

This sequence belongs to the non-disulfide-bridged peptide (NDBP) superfamily. Short antimicrobial peptide (group 4) family. In terms of tissue distribution, expressed by the venom gland.

It is found in the secreted. In terms of biological role, antimicrobial peptide. Is able to kill Mycobacterium abscessus subsp. massiliense in a dose-dependent manner. Has antifungal activity against Candida spp. and one Cryptococcus neoformans strains with MICs values ranging from 12.5 to 200 uM. Also shows an inhibitory activity on C.albicans biofilms at high concentrations. Shows low cytotoxic activity and has weak hemolytic activity on human erythrocytes. Shows anti-inflammatory activities, since it decreases release of pro-inflammatory cytokines, and increases release of anti-inflammatory cytokines. Acts by blocking the Toll-like receptor 4 (TLR4). In addition, decreases the expression of costimulatory molecules such as CD80 and CD86 in LPS-stimulated cells. In vivo, does not induce immune cell migration. Helical wheel projections predict an amphipathic peptide with distinct hydrophobic and hydrophilic faces. This chain is Antimicrobial peptide ToAp1, found in Tityus obscurus (Amazonian scorpion).